An 882-amino-acid polypeptide reads, in one-letter code: Ubiquitin carboxyl-terminal hydrolase 4 (882 aa).

In terms of domain architecture, Rhodanese spans 182 to 308 (YDSSLLLIDV…WVSKKGACET (127 aa)). A compositionally biased stretch (low complexity) spans 382-399 (KAKSSSTSSVTSSSPAPS). The interval 382–411 (KAKSSSTSSVTSSSPAPSQLVRPQTSSMPP) is disordered. Residues 402-411 (VRPQTSSMPP) show a composition bias toward polar residues. The USP domain maps to 519-879 (VGLENMGNSC…NAYVLFYHRV (361 aa)). Catalysis depends on Cys528, which acts as the Nucleophile. The Proton acceptor role is filled by His836.

This sequence belongs to the peptidase C19 family.

It localises to the cytoplasm. Its subcellular location is the late endosome membrane. It carries out the reaction Thiol-dependent hydrolysis of ester, thioester, amide, peptide and isopeptide bonds formed by the C-terminal Gly of ubiquitin (a 76-residue protein attached to proteins as an intracellular targeting signal).. RFU1 is an inhibitor of deubiquitination activity. Its function is as follows. Ubiquitin thioesterase that acts at the late endosome/prevacuolar compartment to recover ubiquitin from ubiquitinated membrane proteins en route to the vacuole. Also removes ubiquitin from soluble proteins targeted to proteasomes. Is essential to maintain a normal level of free ubiquitin. Required for promoting coordination of DNA replication and avoids DNA overreplication. The polypeptide is Ubiquitin carboxyl-terminal hydrolase 4 (DOA4) (Vanderwaltozyma polyspora (strain ATCC 22028 / DSM 70294 / BCRC 21397 / CBS 2163 / NBRC 10782 / NRRL Y-8283 / UCD 57-17) (Kluyveromyces polysporus)).